A 97-amino-acid polypeptide reads, in one-letter code: Exodeoxyribonuclease 7 small subunit (97 aa).

The segment at 64–97 (NGQLHPAEEKGDDVSNNGVQNQGYKSQFLDGDVF) is disordered. Polar residues predominate over residues 77 to 88 (VSNNGVQNQGYK).

The protein belongs to the XseB family. As to quaternary structure, heterooligomer composed of large and small subunits.

The protein resides in the cytoplasm. The enzyme catalyses Exonucleolytic cleavage in either 5'- to 3'- or 3'- to 5'-direction to yield nucleoside 5'-phosphates.. In terms of biological role, bidirectionally degrades single-stranded DNA into large acid-insoluble oligonucleotides, which are then degraded further into small acid-soluble oligonucleotides. This Limosilactobacillus fermentum (strain NBRC 3956 / LMG 18251) (Lactobacillus fermentum) protein is Exodeoxyribonuclease 7 small subunit.